Consider the following 383-residue polypeptide: Anhydro-N-acetylmuramic acid kinase (383 aa).

ATP is bound at residue 9 to 16; sequence GTSVDSID.

It belongs to the anhydro-N-acetylmuramic acid kinase family.

It catalyses the reaction 1,6-anhydro-N-acetyl-beta-muramate + ATP + H2O = N-acetyl-D-muramate 6-phosphate + ADP + H(+). It functions in the pathway amino-sugar metabolism; 1,6-anhydro-N-acetylmuramate degradation. Its pathway is cell wall biogenesis; peptidoglycan recycling. Its function is as follows. Catalyzes the specific phosphorylation of 1,6-anhydro-N-acetylmuramic acid (anhMurNAc) with the simultaneous cleavage of the 1,6-anhydro ring, generating MurNAc-6-P. Is required for the utilization of anhMurNAc either imported from the medium or derived from its own cell wall murein, and thus plays a role in cell wall recycling. This Crocosphaera subtropica (strain ATCC 51142 / BH68) (Cyanothece sp. (strain ATCC 51142)) protein is Anhydro-N-acetylmuramic acid kinase.